We begin with the raw amino-acid sequence, 625 residues long: Phosphomethylpyrimidine synthase (625 aa).

Substrate-binding positions include Asn-237, Met-266, Tyr-295, His-331, 351-353 (SRG), 392-395 (DGLR), and Glu-431. Residue His-435 participates in Zn(2+) binding. Position 458 (Tyr-458) interacts with substrate. A Zn(2+)-binding site is contributed by His-499. Residues Cys-579, Cys-582, and Cys-587 each contribute to the [4Fe-4S] cluster site.

Belongs to the ThiC family. As to quaternary structure, homodimer. Requires [4Fe-4S] cluster as cofactor.

It catalyses the reaction 5-amino-1-(5-phospho-beta-D-ribosyl)imidazole + S-adenosyl-L-methionine = 4-amino-2-methyl-5-(phosphooxymethyl)pyrimidine + CO + 5'-deoxyadenosine + formate + L-methionine + 3 H(+). It functions in the pathway cofactor biosynthesis; thiamine diphosphate biosynthesis. Catalyzes the synthesis of the hydroxymethylpyrimidine phosphate (HMP-P) moiety of thiamine from aminoimidazole ribotide (AIR) in a radical S-adenosyl-L-methionine (SAM)-dependent reaction. The chain is Phosphomethylpyrimidine synthase from Cupriavidus metallidurans (strain ATCC 43123 / DSM 2839 / NBRC 102507 / CH34) (Ralstonia metallidurans).